Reading from the N-terminus, the 769-residue chain is Glutathione biosynthesis bifunctional protein GshAB (769 aa).

The interval 1 to 347 (MLDSFKENEA…QLADENENNI (347 aa)) is glutamate--cysteine ligase. Residues 514–768 (KLVLAEHGIR…IGDKILDFLF (255 aa)) enclose the ATP-grasp domain. ATP is bound at residue 541 to 599 (SLFEDKQIVVKPKSTNYGWGISIFKNKFTLEDYQEALNIAFSYDSSVIIEEFIPGDEFR). 3 residues coordinate Mg(2+): Asp721, Glu738, and Asn740. Residues Asp721, Glu738, and Asn740 each coordinate Mn(2+).

In the N-terminal section; belongs to the glutamate--cysteine ligase type 1 family. Type 2 subfamily. Monomer. Mg(2+) is required as a cofactor. It depends on Mn(2+) as a cofactor.

The catalysed reaction is L-cysteine + L-glutamate + ATP = gamma-L-glutamyl-L-cysteine + ADP + phosphate + H(+). The enzyme catalyses gamma-L-glutamyl-L-cysteine + glycine + ATP = glutathione + ADP + phosphate + H(+). Its pathway is sulfur metabolism; glutathione biosynthesis; glutathione from L-cysteine and L-glutamate: step 1/2. It functions in the pathway sulfur metabolism; glutathione biosynthesis; glutathione from L-cysteine and L-glutamate: step 2/2. Functionally, synthesizes glutathione from L-glutamate and L-cysteine via gamma-L-glutamyl-L-cysteine. The protein is Glutathione biosynthesis bifunctional protein GshAB of Listeria innocua serovar 6a (strain ATCC BAA-680 / CLIP 11262).